Reading from the N-terminus, the 246-residue chain is UPF0736 protein Aflv_2136 (246 aa).

This sequence belongs to the UPF0736 family.

This Anoxybacillus flavithermus (strain DSM 21510 / WK1) protein is UPF0736 protein Aflv_2136.